Here is a 76-residue protein sequence, read N- to C-terminus: Small ribosomal subunit protein bS18 (76 aa).

This sequence belongs to the bacterial ribosomal protein bS18 family. As to quaternary structure, part of the 30S ribosomal subunit. Forms a tight heterodimer with protein bS6.

Functionally, binds as a heterodimer with protein bS6 to the central domain of the 16S rRNA, where it helps stabilize the platform of the 30S subunit. The protein is Small ribosomal subunit protein bS18 of Aeromonas hydrophila subsp. hydrophila (strain ATCC 7966 / DSM 30187 / BCRC 13018 / CCUG 14551 / JCM 1027 / KCTC 2358 / NCIMB 9240 / NCTC 8049).